A 242-amino-acid polypeptide reads, in one-letter code: Segregation and condensation protein A (242 aa).

This sequence belongs to the ScpA family. As to quaternary structure, component of a cohesin-like complex composed of ScpA, ScpB and the Smc homodimer, in which ScpA and ScpB bind to the head domain of Smc. The presence of the three proteins is required for the association of the complex with DNA.

It localises to the cytoplasm. Functionally, participates in chromosomal partition during cell division. May act via the formation of a condensin-like complex containing Smc and ScpB that pull DNA away from mid-cell into both cell halves. In Streptococcus pneumoniae serotype 19F (strain G54), this protein is Segregation and condensation protein A.